Reading from the N-terminus, the 230-residue chain is Orotidine 5'-phosphate decarboxylase (230 aa).

Residues aspartate 10, lysine 31, aspartate 58 to threonine 67, threonine 117, arginine 179, glutamine 188, glycine 208, and arginine 209 each bind substrate. The active-site Proton donor is lysine 60.

It belongs to the OMP decarboxylase family. Type 1 subfamily. In terms of assembly, homodimer.

The catalysed reaction is orotidine 5'-phosphate + H(+) = UMP + CO2. Its pathway is pyrimidine metabolism; UMP biosynthesis via de novo pathway; UMP from orotate: step 2/2. Functionally, catalyzes the decarboxylation of orotidine 5'-monophosphate (OMP) to uridine 5'-monophosphate (UMP). The polypeptide is Orotidine 5'-phosphate decarboxylase (Staphylococcus aureus (strain bovine RF122 / ET3-1)).